Here is a 290-residue protein sequence, read N- to C-terminus: Feruloyl esterase D (290 aa).

A signal peptide spans 1-25 (MAGLHSRLTTFLLLLLSALPAIAAA). The tract at residues 260 to 280 (HGGDHNPSQRDPGQNDPFAPR) is disordered.

The protein belongs to the serine esterase family.

Its subcellular location is the secreted. It carries out the reaction feruloyl-polysaccharide + H2O = ferulate + polysaccharide.. Involved in degradation of plant cell walls. Hydrolyzes the feruloyl-arabinose ester bond in arabinoxylans as well as the feruloyl-galactose and feruloyl-arabinose ester bonds in pectin. Active against methyl esters of ferulate (MFA), sinapate (MSA), caffeate (MCA) and p-coumarate (MpCA). The chain is Feruloyl esterase D from Neurospora crassa (strain ATCC 24698 / 74-OR23-1A / CBS 708.71 / DSM 1257 / FGSC 987).